The primary structure comprises 383 residues: Pantothenate kinase 1 (383 aa).

Belongs to the type II pantothenate kinase family. In terms of tissue distribution, highly expressed in leaves and developing seeds. Expressed in roots, stems and flowers.

The catalysed reaction is (R)-pantothenate + ATP = (R)-4'-phosphopantothenate + ADP + H(+). The protein operates within cofactor biosynthesis; coenzyme A biosynthesis; CoA from (R)-pantothenate: step 1/5. With respect to regulation, regulated by feedback inhibition by malonyl-CoA. Its function is as follows. Catalyzes the phosphorylation of pantothenate the first step in CoA biosynthesis. May play a role in the physiological regulation of the intracellular CoA concentration. Functionally redudant with PANK2. The protein is Pantothenate kinase 1 (PANK1) of Arabidopsis thaliana (Mouse-ear cress).